The primary structure comprises 1769 residues: Tight junction protein 1 (1769 aa).

One can recognise a PDZ 1 domain in the interval 23–110 (TVTLHRAPGF…NAKITIRRKK (88 aa)). Residues 102-112 (AKITIRRKKKV) show a composition bias toward basic residues. The tract at residues 102–188 (AKITIRRKKK…QPPKPTKVTL (87 aa)) is disordered. Acidic residues predominate over residues 123 to 135 (PVSENEDSYDEEV). Serine 125 is subject to Phosphoserine. Tyrosine 131 carries the phosphotyrosine modification. The segment covering 148–174 (RRSEKSWARDRSASRERSLSPRSDRRS) has biased composition (basic and acidic residues). Phosphoserine occurs at positions 174, 177, and 178. Threonine 184 is subject to Phosphothreonine. The PDZ 2 domain occupies 185–263 (KVTLVKSRKN…KLKMVVQRDE (79 aa)). Phosphoserine is present on residues serine 211 and serine 240. At threonine 266 the chain carries Phosphothreonine. A phosphoserine mark is found at serine 274, serine 276, serine 279, serine 283, serine 289, serine 293, serine 296, serine 299, serine 322, serine 328, serine 333, serine 336, and serine 352. Residues 295-362 (ASDHSGRSHD…TPVKHADDHT (68 aa)) form a disordered region. Over residues 298-326 (HSGRSHDRPPRHSRSRSPDQRSEPSDHSR) the composition is skewed to basic and acidic residues. Threonine 353 carries the phosphothreonine modification. A PDZ 3 domain is found at 420–501 (SMKLVKFRKG…GEEVTILAQK (82 aa)). An SH3 domain is found at 515 to 583 (GDSFYIRTHF…PNKNRAEQLA (69 aa)). The region spanning 609 to 790 (SKRNLRKSRE…WYGALKEAIQ (182 aa)) is the Guanylate kinase-like domain. Serine 616 and serine 621 each carry phosphoserine. The interval 632–875 (YERVVLREAG…GTPPESAITR (244 aa)) is occludin (OCLN)-binding region. Threonine 808 is subject to Phosphothreonine. Phosphoserine is present on residues serine 809 and serine 820. Tyrosine 821 is subject to Phosphotyrosine. Serine 823, serine 827, and serine 836 each carry phosphoserine. Disordered regions lie at residues 824–976 (APGS…LRTP) and 1010–1067 (EMMR…SYTD). A phosphothreonine mark is found at threonine 845, threonine 847, threonine 853, threonine 860, and threonine 867. Over residues 878 to 891 (EPVREDSSGMHHEN) the composition is skewed to basic and acidic residues. A compositionally biased stretch (low complexity) spans 892–905 (QTYPPYSPQAQPQP). Serine 911 carries the post-translational modification Phosphoserine. Polar residues-rich tracts occupy residues 933–952 (PETN…TLTN) and 962–976 (PSTS…LRTP). A Phosphoserine modification is found at serine 967. The residue at position 1070 (serine 1070) is a Phosphoserine. 3 disordered regions span residues 1091–1212 (SYYD…KAGH), 1224–1261 (PLIP…MKPQ), and 1273–1589 (KRSA…EFDS). Residues 1108-1124 (QHPRDLDSRQHPEESSE) show a composition bias toward basic and acidic residues. A Phosphoserine modification is found at serine 1138. Phosphotyrosine occurs at positions 1139 and 1164. Residues 1150–1370 (RTSTLRHEEQ…FDRRSFENKP (221 aa)) form an actin-binding region (ABR) region. Residues 1273-1286 (KRSASLENKKDENH) are compositionally biased toward basic and acidic residues. The segment covering 1300-1310 (PGAPIIGPKPT) has biased composition (pro residues). A compositionally biased stretch (basic and acidic residues) spans 1335–1346 (PPEDIVRSNHYD). A Phosphotyrosine modification is found at tyrosine 1353. Phosphoserine is present on serine 1365. Positions 1387–1401 (HSQNQTNFSSYSSKG) are enriched in polar residues. Basic and acidic residues predominate over residues 1402–1419 (KSPEADAPDRSFGEKRYE). Serine 1412 is modified (phosphoserine). 2 stretches are compositionally biased toward polar residues: residues 1460–1471 (NSISLDFQNSLV) and 1514–1523 (AEQTQKTVTP). A compositionally biased stretch (basic and acidic residues) spans 1539–1548 (PFERKFESPK). Phosphoserine is present on residues serine 1546 and serine 1618. The ZU5 domain maps to 1635–1769 (ATARGVFNNN…NCVSVLIDHF (135 aa)).

It belongs to the MAGUK family. Homodimer. Forms heterodimers TJP3. Forms a heterodimer (via PDZ2 domain) with TJP2/ZO2 (via PDZ2 domain). Interacts with OCLN. Interacts with CALM, claudins, CGN/cingulin, CXADR, GJA12, GJD3 and UBN1. Interacts (via ZU5 domain) with CDC42BPB and MYZAP. Interacts (via PDZ domain) with GJA1. Interacts (via PDZ domains) with ANKRD2. Interacts with POPDC1 (via the C-terminus cytoplasmic tail). Interacts with HSPA4. Interacts with KIRREL1. Interacts with DLL1. Interacts with USP53 (via the C-terminal region). Interacts with DNMBP (via C-terminal domain); required for the apical cell-cell junction localization of DNMBP. Interacts with SPEF1. Interacts (via N-terminus) with CTNNA1. Interacts with CLDN18. Interacts with CLDN16 (via TRV motif); this is a prerequisite for anchoring of CLDN16 at the tight junction. Interacts with PKP1; the interaction facilitates TJP1/ZO-1 localization to the plasma membrane. Interacts with PATJ (via PDZ1-6 domains); the interaction is required for attachment and extension of TJP1/ZO1 condensates along the apical cell interface. Phosphorylated at tyrosine redidues in response to epidermal growth factor (EGF). This response is dependent on an intact actin microfilament system. Dephosphorylated by PTPRJ.

Its subcellular location is the cell membrane. It localises to the cell junction. The protein resides in the tight junction. The protein localises to the gap junction. Its function is as follows. TJP1, TJP2, and TJP3 are closely related scaffolding proteins that link tight junction (TJ) transmembrane proteins such as claudins, junctional adhesion molecules, and occludin to the actin cytoskeleton. Forms a multistranded TJP1/ZO1 condensate which elongates to form a tight junction belt, the belt is anchored at the apical cell membrane via interaction with PATJ. The tight junction acts to limit movement of substances through the paracellular space and as a boundary between the compositionally distinct apical and basolateral plasma membrane domains of epithelial and endothelial cells. Necessary for lumenogenesis, and particularly efficient epithelial polarization and barrier formation. Plays a role in the regulation of cell migration by targeting CDC42BPBb to the leading edge of migrating cells. With TJP2 and TJP3, participates in the junctional retention and stability of the transcription factor DBPA, but is not involved in its shuttling to the nucleus. May play a role in mediating cell morphology changes during ameloblast differentiation via its role in tight junctions. This chain is Tight junction protein 1, found in Canis lupus familiaris (Dog).